The primary structure comprises 152 residues: TOMM20-like protein 1 (152 aa).

The Mitochondrial intermembrane segment spans residues 1–6 (MPSVRL). A helical membrane pass occupies residues 7 to 27 (GVGLLAGLAAGGAVVLLSYCV). Over 28–152 (YLDWRRHRDP…STEHLKDDPD (125 aa)) the chain is Cytoplasmic.

Belongs to the Tom20 family.

It localises to the mitochondrion outer membrane. This chain is TOMM20-like protein 1 (Tomm20l), found in Mus musculus (Mouse).